Here is a 322-residue protein sequence, read N- to C-terminus: uncharacterized protein (322 aa).

A helical membrane pass occupies residues 299-319 (GLLLEGTIVALILLEIILALA).

Its subcellular location is the membrane. This is an uncharacterized protein from Methanocaldococcus jannaschii (strain ATCC 43067 / DSM 2661 / JAL-1 / JCM 10045 / NBRC 100440) (Methanococcus jannaschii).